Reading from the N-terminus, the 576-residue chain is Apolipoprotein N-acyltransferase 1 (576 aa).

Helical transmembrane passes span 15–35, 38–58, 60–80, 92–112, 128–148, 168–188, and 204–224; these read LILC…FSFF, GVFA…TSIW, AFLW…YWIP, FVSI…FFLF, YILL…FQIF, ICGV…FLIL, and IASL…IGYI. The region spanning 236–538 is the CN hydrolase domain; sequence LSVLMIQPDT…TGTRAFSIRL (303 aa). The Proton acceptor role is filled by E285. K355 is a catalytic residue. C446 functions as the Nucleophile in the catalytic mechanism. Residues 549–569 form a helical membrane-spanning segment; the sequence is FGNSFLWIFCILILISRLIFV.

It belongs to the CN hydrolase family. Apolipoprotein N-acyltransferase subfamily.

It localises to the cell inner membrane. It catalyses the reaction N-terminal S-1,2-diacyl-sn-glyceryl-L-cysteinyl-[lipoprotein] + a glycerophospholipid = N-acyl-S-1,2-diacyl-sn-glyceryl-L-cysteinyl-[lipoprotein] + a 2-acyl-sn-glycero-3-phospholipid + H(+). Its pathway is protein modification; lipoprotein biosynthesis (N-acyl transfer). Its function is as follows. Catalyzes the phospholipid dependent N-acylation of the N-terminal cysteine of apolipoprotein, the last step in lipoprotein maturation. The protein is Apolipoprotein N-acyltransferase 1 of Leptospira interrogans serogroup Icterohaemorrhagiae serovar Lai (strain 56601).